The chain runs to 44 residues: Photosystem II reaction center protein K (44 aa).

The propeptide occupies 1 to 7; the sequence is METLLLS. Residues 23–43 form a helical membrane-spanning segment; it reads LPIIPVFFLLLAFVWQAAIGF.

This sequence belongs to the PsbK family. PSII is composed of 1 copy each of membrane proteins PsbA, PsbB, PsbC, PsbD, PsbE, PsbF, PsbH, PsbI, PsbJ, PsbK, PsbL, PsbM, PsbT, PsbX, PsbY, PsbZ, Psb30/Ycf12, at least 3 peripheral proteins of the oxygen-evolving complex and a large number of cofactors. It forms dimeric complexes.

It is found in the plastid. The protein resides in the chloroplast thylakoid membrane. Its function is as follows. One of the components of the core complex of photosystem II (PSII). PSII is a light-driven water:plastoquinone oxidoreductase that uses light energy to abstract electrons from H(2)O, generating O(2) and a proton gradient subsequently used for ATP formation. It consists of a core antenna complex that captures photons, and an electron transfer chain that converts photonic excitation into a charge separation. The sequence is that of Photosystem II reaction center protein K from Phaeodactylum tricornutum (strain CCAP 1055/1).